The chain runs to 198 residues: MVEKHLLEFLEKLQFLISKNVKISHYGIENVKKICGVDIAYKGNLGFSVGVSMDINSGDYNYKSYVGEVNFPYIPGFLFMREAPLMIKAIEGLDCHLLLVDGHGIAHPRKSGIATVIGVLLDFPTIGVAKSRLTGDLVNESEITYVYLNGEKVGVKFGRYFYSPGNKVDLQDCIELGKRGYPKVLKIADMLTKKIKKE.

Residues D38 and D101 each contribute to the Mg(2+) site.

The protein belongs to the endonuclease V family. Mg(2+) serves as cofactor.

It localises to the cytoplasm. The enzyme catalyses Endonucleolytic cleavage at apurinic or apyrimidinic sites to products with a 5'-phosphate.. Its function is as follows. DNA repair enzyme involved in the repair of deaminated bases. Selectively cleaves double-stranded DNA at the second phosphodiester bond 3' to a deoxyinosine leaving behind the intact lesion on the nicked DNA. The protein is Endonuclease V of Saccharolobus islandicus (strain Y.N.15.51 / Yellowstone #2) (Sulfolobus islandicus).